The sequence spans 286 residues: Bifunctional protein FolD (286 aa).

Residues G165–S167 and S190 each bind NADP(+).

Belongs to the tetrahydrofolate dehydrogenase/cyclohydrolase family. Homodimer.

The enzyme catalyses (6R)-5,10-methylene-5,6,7,8-tetrahydrofolate + NADP(+) = (6R)-5,10-methenyltetrahydrofolate + NADPH. It carries out the reaction (6R)-5,10-methenyltetrahydrofolate + H2O = (6R)-10-formyltetrahydrofolate + H(+). Its pathway is one-carbon metabolism; tetrahydrofolate interconversion. Catalyzes the oxidation of 5,10-methylenetetrahydrofolate to 5,10-methenyltetrahydrofolate and then the hydrolysis of 5,10-methenyltetrahydrofolate to 10-formyltetrahydrofolate. This chain is Bifunctional protein FolD, found in Burkholderia cenocepacia (strain ATCC BAA-245 / DSM 16553 / LMG 16656 / NCTC 13227 / J2315 / CF5610) (Burkholderia cepacia (strain J2315)).